Here is a 224-residue protein sequence, read N- to C-terminus: Coiled-coil domain-containing protein 43 (224 aa).

Lys-95 participates in a covalent cross-link: Glycyl lysine isopeptide (Lys-Gly) (interchain with G-Cter in SUMO1). Coiled-coil stretches lie at residues 121-145 (SEEEKQRKAALLAQYADVTDEEDEA) and 177-218 (RKLE…KRTQ). Residues 138 to 149 (VTDEEDEADEKD) are compositionally biased toward acidic residues. 2 disordered regions span residues 138-157 (VTDEEDEADEKDDSGATTMN) and 176-224 (ARKL…ERKR). Thr-139 is modified (phosphothreonine). Over residues 176–211 (ARKLERDSLRDESQRKKEQDKLQRERDKLAKQERKE) the composition is skewed to basic and acidic residues. Residues 212–224 (KEKKRTQRGERKR) show a composition bias toward basic residues.

This sequence belongs to the CCDC43 family.

The polypeptide is Coiled-coil domain-containing protein 43 (CCDC43) (Homo sapiens (Human)).